A 342-amino-acid chain; its full sequence is MGVKIGELIEDKVELELSDIAGKKIALDAFNAMYQFLAKVRQPDGTPLMTSKGEITSVHSGIFYRTANFLKEGIIPIYVFDGEKPSFKSRAIEERVRAREEAELKWKEALEIGDLEEARKYAQAALNITGDIVEDCKTILKLMGVPIVQAPSEGEAQAAHMAMKGDVWATASQDYDSLLFGAPRLIRNLTITGKRKLPGKEVYVDINPELIELESVLKRNGISREQLIMIGILVGTDYNLGGVKGIGVKRALELVKKYKRPEDLFSKVPWEFDVDPISIYEFFLNPPTTDDYDTSLKRPMSDELLKFMVEEHEFSEERVKKVINEIEESYRMLSGGGLESWF.

An N-domain region spans residues M1 to R99. Mg(2+) contacts are provided by D28, D81, E153, E155, D174, D176, and D237. The tract at residues E117–K259 is I-domain.

This sequence belongs to the XPG/RAD2 endonuclease family. FEN1 subfamily. As to quaternary structure, interacts with PCNA. PCNA stimulates the nuclease activity without altering cleavage specificity. Requires Mg(2+) as cofactor.

Functionally, structure-specific nuclease with 5'-flap endonuclease and 5'-3' exonuclease activities involved in DNA replication and repair. During DNA replication, cleaves the 5'-overhanging flap structure that is generated by displacement synthesis when DNA polymerase encounters the 5'-end of a downstream Okazaki fragment. Binds the unpaired 3'-DNA end and kinks the DNA to facilitate 5' cleavage specificity. Cleaves one nucleotide into the double-stranded DNA from the junction in flap DNA, leaving a nick for ligation. Also involved in the base excision repair (BER) pathway. Acts as a genome stabilization factor that prevents flaps from equilibrating into structures that lead to duplications and deletions. Also possesses 5'-3' exonuclease activity on nicked or gapped double-stranded DNA. The chain is Flap endonuclease 1 from Korarchaeum cryptofilum (strain OPF8).